Here is a 281-residue protein sequence, read N- to C-terminus: Phosphatidylglycerol--prolipoprotein diacylglyceryl transferase (281 aa).

The next 4 helical transmembrane spans lie at Val23–Trp43, Phe71–Tyr91, Trp107–Phe127, and Ile133–Val153. Residue Arg154 participates in a 1,2-diacyl-sn-glycero-3-phospho-(1'-sn-glycerol) binding. A run of 3 helical transmembrane segments spans residues Leu189–Val209, Gly217–Phe237, and Leu247–Leu267.

This sequence belongs to the Lgt family.

Its subcellular location is the cell inner membrane. The enzyme catalyses L-cysteinyl-[prolipoprotein] + a 1,2-diacyl-sn-glycero-3-phospho-(1'-sn-glycerol) = an S-1,2-diacyl-sn-glyceryl-L-cysteinyl-[prolipoprotein] + sn-glycerol 1-phosphate + H(+). It participates in protein modification; lipoprotein biosynthesis (diacylglyceryl transfer). Catalyzes the transfer of the diacylglyceryl group from phosphatidylglycerol to the sulfhydryl group of the N-terminal cysteine of a prolipoprotein, the first step in the formation of mature lipoproteins. The chain is Phosphatidylglycerol--prolipoprotein diacylglyceryl transferase from Brucella anthropi (strain ATCC 49188 / DSM 6882 / CCUG 24695 / JCM 21032 / LMG 3331 / NBRC 15819 / NCTC 12168 / Alc 37) (Ochrobactrum anthropi).